The following is a 127-amino-acid chain: MNIKNSLILIISTIFVLSMINGGLTSDPTCVGAPDGQVYLFSSWDFQGERYVYNISQGYLSLPDGFRNNIQSFVSGADVCFVKWYPSEQYQITAGESHRNYAALTNFGQRMDAIIPGNCSNIVCSPK.

The first 25 residues, Met1 to Thr25, serve as a signal peptide directing secretion. Residues Asn54 and Asn118 are each glycosylated (N-linked (GlcNAc...) asparagine).

Belongs to the Dictyostelium gerABC family.

It is found in the secreted. In Dictyostelium discoideum (Social amoeba), this protein is Spore germination protein 1 (gerA).